Reading from the N-terminus, the 290-residue chain is Undecaprenyl-diphosphatase (290 aa).

The next 8 helical transmembrane spans lie at 5–25, 44–64, 88–108, 122–142, 152–172, 195–215, 226–246, and 255–275; these read IGIF…YFPI, GTAY…TYFY, VRLF…GLAL, LSVI…SESL, IRVI…VPGV, FSFL…LKVL, PIVA…AWLL, and LVFV…LAAG.

It belongs to the UppP family.

The protein resides in the cell inner membrane. It catalyses the reaction di-trans,octa-cis-undecaprenyl diphosphate + H2O = di-trans,octa-cis-undecaprenyl phosphate + phosphate + H(+). Its function is as follows. Catalyzes the dephosphorylation of undecaprenyl diphosphate (UPP). Confers resistance to bacitracin. This is Undecaprenyl-diphosphatase from Gloeobacter violaceus (strain ATCC 29082 / PCC 7421).